Consider the following 132-residue polypeptide: Small ribosomal subunit protein eS17B (132 aa).

Position 43 is a phosphoserine (S43).

Belongs to the eukaryotic ribosomal protein eS17 family. Component of the small ribosomal subunit (SSU). Mature yeast ribosomes consist of a small (40S) and a large (60S) subunit. The 40S small subunit contains 1 molecule of ribosomal RNA (18S rRNA) and at least 33 different proteins. The large 60S subunit contains 3 rRNA molecules (25S, 5.8S and 5S rRNA) and at least 46 different proteins.

The protein resides in the cytoplasm. Component of the ribosome, a large ribonucleoprotein complex responsible for the synthesis of proteins in the cell. The small ribosomal subunit (SSU) binds messenger RNAs (mRNAs) and translates the encoded message by selecting cognate aminoacyl-transfer RNA (tRNA) molecules. The large subunit (LSU) contains the ribosomal catalytic site termed the peptidyl transferase center (PTC), which catalyzes the formation of peptide bonds, thereby polymerizing the amino acids delivered by tRNAs into a polypeptide chain. The nascent polypeptides leave the ribosome through a tunnel in the LSU and interact with protein factors that function in enzymatic processing, targeting, and the membrane insertion of nascent chains at the exit of the ribosomal tunnel. This Schizosaccharomyces pombe (strain 972 / ATCC 24843) (Fission yeast) protein is Small ribosomal subunit protein eS17B (rps1702).